Reading from the N-terminus, the 373-residue chain is Ubiquitin domain-containing protein DSK2 (373 aa).

Residues Met-1 to Lys-76 enclose the Ubiquitin-like domain. Glycyl lysine isopeptide (Lys-Gly) (interchain with G-Cter in ubiquitin) cross-links involve residues Lys-13 and Lys-76. Positions Asp-221 to Ala-270 are disordered. Over residues Gly-231–Ala-270 the composition is skewed to low complexity. The UBA domain maps to Pro-327–Gly-371.

It is found in the nucleus. Involved, with RAD23 in spindle pole body duplication. Involved in the ubiquitin-proteasome proteolytic pathway. The sequence is that of Ubiquitin domain-containing protein DSK2 (DSK2) from Saccharomyces cerevisiae (strain ATCC 204508 / S288c) (Baker's yeast).